We begin with the raw amino-acid sequence, 265 residues long: Probable U2 small nuclear ribonucleoprotein A' (265 aa).

LRR repeat units lie at residues 20 to 41 (RERE…GATL), 43 to 64 (QFDT…PHLP), 65 to 86 (RLKC…LEEA), and 89 to 110 (NLGS…EPLV). The region spanning 123–161 (NPVSTKPNYREYMAYKFPQLRLLDFRKIKQKDRQAAQEF) is the LRRCT domain.

It belongs to the U2 small nuclear ribonucleoprotein A family. As to quaternary structure, interacts with the SMN complex.

The protein resides in the nucleus. Functionally, involved in pre-mRNA splicing as component of the spliceosome. Associated with sn-RNP U2, where it contributes to the binding of stem loop IV of U2 snRNA. In the germ line, has a role in oogenesis, by regulating spermatogenesis and nurse cell nuclei chromatin decondensation and dispersal, probably by regulating the splicing of proteins necessary for germline differentiation such as the meiotic protein mei-P26. The protein is Probable U2 small nuclear ribonucleoprotein A' (U2A) of Drosophila melanogaster (Fruit fly).